A 76-amino-acid polypeptide reads, in one-letter code: Small ribosomal subunit protein eS17 (76 aa).

Belongs to the eukaryotic ribosomal protein eS17 family.

In Picrophilus torridus (strain ATCC 700027 / DSM 9790 / JCM 10055 / NBRC 100828 / KAW 2/3), this protein is Small ribosomal subunit protein eS17.